Here is a 344-residue protein sequence, read N- to C-terminus: NADH-ubiquinone oxidoreductase chain 2 (344 aa).

11 consecutive transmembrane segments (helical) span residues 1–21, 24–44, 59–79, 94–114, 121–141, 150–170, 177–197, 201–221, 245–265, 273–293, and 324–344; these read MNPL…TITL, FHWL…IPLM, YFLT…ISAW, MNIL…HFWI, ISLP…MALL, LNLT…GGIG, IMAF…KFDP, LLNF…LTTI, LILL…KLLI, NATL…FFYI, and TAIM…LLLL.

The protein belongs to the complex I subunit 2 family.

Its subcellular location is the mitochondrion inner membrane. The enzyme catalyses a ubiquinone + NADH + 5 H(+)(in) = a ubiquinol + NAD(+) + 4 H(+)(out). Functionally, core subunit of the mitochondrial membrane respiratory chain NADH dehydrogenase (Complex I) that is believed to belong to the minimal assembly required for catalysis. Complex I functions in the transfer of electrons from NADH to the respiratory chain. The immediate electron acceptor for the enzyme is believed to be ubiquinone. This is NADH-ubiquinone oxidoreductase chain 2 (MT-ND2) from Aquarana catesbeiana (American bullfrog).